The sequence spans 83 residues: uncharacterized protein (83 aa).

This is an uncharacterized protein from Lactuca sativa (Garden lettuce).